The following is an 833-amino-acid chain: Leucine--tRNA ligase (833 aa).

Positions 41-52 (PYPSGAGLHVGH) match the 'HIGH' region motif. The 'KMSKS' region signature appears at 610-614 (KMSKS). Residue Lys-613 coordinates ATP.

The protein belongs to the class-I aminoacyl-tRNA synthetase family.

It is found in the cytoplasm. It catalyses the reaction tRNA(Leu) + L-leucine + ATP = L-leucyl-tRNA(Leu) + AMP + diphosphate. The polypeptide is Leucine--tRNA ligase (Streptococcus pyogenes serotype M28 (strain MGAS6180)).